The primary structure comprises 112 residues: Protein NIM1-INTERACTING 3 (112 aa).

2 disordered regions span residues 1–20 and 77–112; these read MDRD…EEKM and EKAA…NLSL. Coiled-coil stretches lie at residues 1-35 and 69-96; these read MDRD…EMRK and NKAE…SKEK. Over residues 77–89 the composition is skewed to low complexity; sequence EKAANESSSASNE.

It belongs to the NPR1-interactor family. In terms of assembly, interacts with NPR1 C-terminal region.

It localises to the nucleus. The chain is Protein NIM1-INTERACTING 3 from Arabidopsis thaliana (Mouse-ear cress).